Reading from the N-terminus, the 432-residue chain is 3-phosphoshikimate 1-carboxyvinyltransferase (432 aa).

The 3-phosphoshikimate site is built by lysine 23, serine 24, and arginine 28. Lysine 23 serves as a coordination point for phosphoenolpyruvate. Residues glycine 95 and arginine 123 each contribute to the phosphoenolpyruvate site. Residues serine 167, glutamine 169, aspartate 317, and lysine 344 each contribute to the 3-phosphoshikimate site. A phosphoenolpyruvate-binding site is contributed by glutamine 169. Aspartate 317 (proton acceptor) is an active-site residue. The phosphoenolpyruvate site is built by arginine 348 and arginine 390.

It belongs to the EPSP synthase family. As to quaternary structure, monomer.

Its subcellular location is the cytoplasm. It catalyses the reaction 3-phosphoshikimate + phosphoenolpyruvate = 5-O-(1-carboxyvinyl)-3-phosphoshikimate + phosphate. It participates in metabolic intermediate biosynthesis; chorismate biosynthesis; chorismate from D-erythrose 4-phosphate and phosphoenolpyruvate: step 6/7. Functionally, catalyzes the transfer of the enolpyruvyl moiety of phosphoenolpyruvate (PEP) to the 5-hydroxyl of shikimate-3-phosphate (S3P) to produce enolpyruvyl shikimate-3-phosphate and inorganic phosphate. The chain is 3-phosphoshikimate 1-carboxyvinyltransferase from Staphylococcus carnosus (strain TM300).